Here is a 103-residue protein sequence, read N- to C-terminus: Protamine-2 (103 aa).

The interval 1–103 (MVRYRTRSLS…RTRRRRCRRY (103 aa)) is disordered. Phosphoserine is present on residues S8 and S10. Residues 8 to 17 (SLSERPHEVH) are compositionally biased toward basic and acidic residues. Residues 18-29 (GQQVHGQDQGHN) show a composition bias toward low complexity. Phosphoserine is present on S37. The span at 39–48 (EHVEVYERTH) shows a compositional bias: basic and acidic residues. The segment covering 49-103 (QGHSHHRRRRCSQRRLHRIHRRRHRSCRRRRRRSCRHRRRHRRGCRTRRRRCRRY) has biased composition (basic residues).

Belongs to the protamine P2 family. As to quaternary structure, interacts with TDRP. In terms of processing, proteolytic processing into mature chains is required for histone eviction during spermatogenesis. Transition proteins (TNP1 and TNP2) are required for processing. Testis.

It is found in the nucleus. The protein resides in the chromosome. Its function is as follows. Protamines substitute for histones in the chromatin of sperm during the haploid phase of spermatogenesis. They compact sperm DNA into a highly condensed, stable and inactive complex. The protein is Protamine-2 (PRM2) of Erythrocebus patas (Red guenon).